Consider the following 629-residue polypeptide: LEAF RUST 10 DISEASE-RESISTANCE LOCUS RECEPTOR-LIKE PROTEIN KINASE-like 1.1 (629 aa).

Positions 1-19 (METVSVLLFFFLFLLAAEA) are cleaved as a signal peptide. The Extracellular segment spans residues 20–225 (RSTKRTGCKD…PNNYHAEMRL (206 aa)). Asn-56, Asn-92, Asn-123, Asn-124, Asn-172, and Asn-177 each carry an N-linked (GlcNAc...) asparagine glycan. Residues 226–246 (GLGIGGSVILIIILVALFAVI) form a helical membrane-spanning segment. The Cytoplasmic portion of the chain corresponds to 247 to 629 (HRNYRRKDGS…TTPNTSAYEF (383 aa)). Residues 291 to 565 (FSKDRLLGDG…TMEQVVHELK (275 aa)) enclose the Protein kinase domain. ATP is bound by residues 297–305 (LGDGGFGTV) and Lys-319. At Tyr-365 the chain carries Phosphotyrosine. Asp-416 acts as the Proton acceptor in catalysis. Ser-449 bears the Phosphoserine mark. A phosphothreonine mark is found at Thr-450 and Thr-455. Tyr-463 is modified (phosphotyrosine). The disordered stretch occupies residues 609 to 629 (VSVTDQWTSKSTTPNTSAYEF).

The protein belongs to the protein kinase superfamily. Ser/Thr protein kinase family.

It localises to the cell membrane. It carries out the reaction L-seryl-[protein] + ATP = O-phospho-L-seryl-[protein] + ADP + H(+). The catalysed reaction is L-threonyl-[protein] + ATP = O-phospho-L-threonyl-[protein] + ADP + H(+). In Arabidopsis thaliana (Mouse-ear cress), this protein is LEAF RUST 10 DISEASE-RESISTANCE LOCUS RECEPTOR-LIKE PROTEIN KINASE-like 1.1.